A 146-amino-acid polypeptide reads, in one-letter code: D-aminoacyl-tRNA deacylase (146 aa).

A Gly-cisPro motif, important for rejection of L-amino acids motif is present at residues 137–138 (GP).

The protein belongs to the DTD family. In terms of assembly, homodimer.

It is found in the cytoplasm. It carries out the reaction glycyl-tRNA(Ala) + H2O = tRNA(Ala) + glycine + H(+). The catalysed reaction is a D-aminoacyl-tRNA + H2O = a tRNA + a D-alpha-amino acid + H(+). An aminoacyl-tRNA editing enzyme that deacylates mischarged D-aminoacyl-tRNAs. Also deacylates mischarged glycyl-tRNA(Ala), protecting cells against glycine mischarging by AlaRS. Acts via tRNA-based rather than protein-based catalysis; rejects L-amino acids rather than detecting D-amino acids in the active site. By recycling D-aminoacyl-tRNA to D-amino acids and free tRNA molecules, this enzyme counteracts the toxicity associated with the formation of D-aminoacyl-tRNA entities in vivo and helps enforce protein L-homochirality. The protein is D-aminoacyl-tRNA deacylase of Bacillus cereus (strain B4264).